The primary structure comprises 554 residues: Arginine--tRNA ligase (554 aa).

A 'HIGH' region motif is present at residues A130 to H140.

This sequence belongs to the class-I aminoacyl-tRNA synthetase family. In terms of assembly, monomer.

The protein localises to the cytoplasm. The enzyme catalyses tRNA(Arg) + L-arginine + ATP = L-arginyl-tRNA(Arg) + AMP + diphosphate. The chain is Arginine--tRNA ligase from Staphylococcus carnosus (strain TM300).